The sequence spans 507 residues: Histidine ammonia-lyase (507 aa).

A cross-link (5-imidazolinone (Ala-Gly)) is located at residues 141-143 (ASG). 2,3-didehydroalanine (Ser) is present on serine 142.

It belongs to the PAL/histidase family. Post-translationally, contains an active site 4-methylidene-imidazol-5-one (MIO), which is formed autocatalytically by cyclization and dehydration of residues Ala-Ser-Gly.

The protein localises to the cytoplasm. It catalyses the reaction L-histidine = trans-urocanate + NH4(+). It participates in amino-acid degradation; L-histidine degradation into L-glutamate; N-formimidoyl-L-glutamate from L-histidine: step 1/3. The sequence is that of Histidine ammonia-lyase from Natranaerobius thermophilus (strain ATCC BAA-1301 / DSM 18059 / JW/NM-WN-LF).